Here is a 147-residue protein sequence, read N- to C-terminus: MADNDNEDSIMDDLVEEYVETEEENFVDSEEESEDKDEIVESPSICEGFVQASSQTLVVIPDNERITSNVLTTFEATRLVAVRAQQLAINGSTMLKKKYSSPIDIAKQELFNRKIPLLVMRCIKVTPDGQKIVEIWNPREMGIPLLD.

The disordered stretch occupies residues 20 to 39 (ETEEENFVDSEEESEDKDEI).

Belongs to the archaeal RpoK/eukaryotic RPB6 RNA polymerase subunit family. In terms of assembly, part of the viral DNA-directed RNA polymerase that consists of 8 polII-like subunits (RPB1, RPB2, RPB3, RPB5, RPB6, RPB7, RPB9, RPB10), a capping enzyme and a termination factor.

The protein localises to the host cytoplasm. The protein resides in the virion. In terms of biological role, component of the DNA-directed RNA polymerase (RNAP) that catalyzes the transcription in the cytoplasm of viral DNA into RNA using the four ribonucleoside triphosphates as substrates. The sequence is that of DNA-directed RNA polymerase subunit 6 homolog from Ornithodoros (relapsing fever ticks).